Here is a 352-residue protein sequence, read N- to C-terminus: 4-hydroxy-3-methylbut-2-enyl diphosphate reductase (352 aa).

Cys-36 lines the [4Fe-4S] cluster pocket. Residues His-76 and His-114 each contribute to the (2E)-4-hydroxy-3-methylbut-2-enyl diphosphate site. His-76 and His-114 together coordinate dimethylallyl diphosphate. 2 residues coordinate isopentenyl diphosphate: His-76 and His-114. Residue Cys-136 participates in [4Fe-4S] cluster binding. Position 164 (His-164) interacts with (2E)-4-hydroxy-3-methylbut-2-enyl diphosphate. His-164 is a binding site for dimethylallyl diphosphate. Isopentenyl diphosphate is bound at residue His-164. Glu-166 serves as the catalytic Proton donor. Thr-204 contacts (2E)-4-hydroxy-3-methylbut-2-enyl diphosphate. Position 234 (Cys-234) interacts with [4Fe-4S] cluster. Residues Ser-262, Ser-263, Asn-264, and Ser-309 each contribute to the (2E)-4-hydroxy-3-methylbut-2-enyl diphosphate site. Dimethylallyl diphosphate-binding residues include Ser-262, Ser-263, Asn-264, and Ser-309. Isopentenyl diphosphate contacts are provided by Ser-262, Ser-263, Asn-264, and Ser-309.

Belongs to the IspH family. The cofactor is [4Fe-4S] cluster.

The catalysed reaction is isopentenyl diphosphate + 2 oxidized [2Fe-2S]-[ferredoxin] + H2O = (2E)-4-hydroxy-3-methylbut-2-enyl diphosphate + 2 reduced [2Fe-2S]-[ferredoxin] + 2 H(+). It catalyses the reaction dimethylallyl diphosphate + 2 oxidized [2Fe-2S]-[ferredoxin] + H2O = (2E)-4-hydroxy-3-methylbut-2-enyl diphosphate + 2 reduced [2Fe-2S]-[ferredoxin] + 2 H(+). It participates in isoprenoid biosynthesis; dimethylallyl diphosphate biosynthesis; dimethylallyl diphosphate from (2E)-4-hydroxy-3-methylbutenyl diphosphate: step 1/1. Its pathway is isoprenoid biosynthesis; isopentenyl diphosphate biosynthesis via DXP pathway; isopentenyl diphosphate from 1-deoxy-D-xylulose 5-phosphate: step 6/6. Its function is as follows. Catalyzes the conversion of 1-hydroxy-2-methyl-2-(E)-butenyl 4-diphosphate (HMBPP) into a mixture of isopentenyl diphosphate (IPP) and dimethylallyl diphosphate (DMAPP). Acts in the terminal step of the DOXP/MEP pathway for isoprenoid precursor biosynthesis. This Bifidobacterium longum (strain NCC 2705) protein is 4-hydroxy-3-methylbut-2-enyl diphosphate reductase.